Reading from the N-terminus, the 888-residue chain is Transmembrane channel-like protein 2 (888 aa).

Residues 1–128 (MSPQLKSLDE…SLGSSVSTGD (128 aa)) form a disordered region. Over 1-228 (MSPQLKSLDE…KIKDIESHFG (228 aa)) the chain is Cytoplasmic. 3 stretches are compositionally biased toward basic and acidic residues: residues 7–16 (SLDEEGDKSA), 32–44 (DGHRAQSSRKDPA), and 87–110 (RTSLKEQRASPKKEREALRKEAGK). Residues 117–128 (STSLGSSVSTGD) are compositionally biased toward polar residues. Residues 229-266 (SSVASYFIFLRWMYGVNLVLFGLIFGLVIIPEVLMGMP) form a helical membrane-spanning segment. At 267 to 317 (YGSIPRKTVPRAEEERAMDFSVLWDFEGYIKYSALFYGYYNNQRTIGWLRY) the chain is on the extracellular side. Residues 318–350 (RLPMAYFMVGVSVFGYSLMIVIRSMASNTQGST) form a helical membrane-spanning segment. At 351–406 (SEGDSDSFTFSFKMFTSWDYLIGNSETADNKYVSITTSFKESIVDEQESNKEGNIH) the chain is on the cytoplasmic side. Residues 407 to 437 (LTRFLRVLANFLILCCLCGSGYLIYFVVKRS) form a helical membrane-spanning segment. The Extracellular portion of the chain corresponds to 438 to 447 (QEFSKMQNVS). Residues 448-475 (WYERNEVEIVMSLLGMFCPPLFETIAAL) form a helical membrane-spanning segment. The Cytoplasmic segment spans residues 476 to 479 (ENYH). The helical transmembrane segment at 480–514 (PRTGLKWQLGRIFALFLGNLYTFLLALMDDVHLKL) threads the bilayer. The Extracellular portion of the chain corresponds to 515 to 556 (SNEEKIKNITHWTLFNYYNSSGGNESVPRPPPHPADVPRGSC). The chain crosses the membrane as a helical span at residues 557 to 594 (WETAVGIEFMRLTVSDMLVTYLTILVGDFLRACFVRFM). Over 595 to 613 (NHCWCWDLEAGFPSYAEFD) the chain is Cytoplasmic. The chain crosses the membrane as a helical span at residues 614–634 (ISGNVLGLIFNQGMIWMGSFY). At 635-637 (APG) the chain is on the extracellular side. A helical membrane pass occupies residues 638-660 (LVGINVLRLLTSMYFQCWAVMSS). The Cytoplasmic segment spans residues 661–674 (NVPHERVFKASRSN). A helical membrane pass occupies residues 675 to 698 (NFYMGLLLLVLFLSLLPVAYTVMS). Residues 699-741 (LPPSFDCGPFSGKNRMYDVLHETIENDFPKFLGKIFAFLANPG) lie on the Extracellular side of the membrane. Residues 742-775 (LIIPAILLMFLAIYYLNSVSKSLSRANAQLRKKI) form a helical membrane-spanning segment. Over 776 to 888 (QALREVEKNH…SGKRTQRPHN (113 aa)) the chain is Cytoplasmic. Positions 813–888 (LTKEEPTSHS…SGKRTQRPHN (76 aa)) are disordered. Polar residues-rich tracts occupy residues 836-851 (PHTSSTEGGASPSTSW) and 866-881 (GQPQSQTYTGRSPSGK).

This sequence belongs to the TMC family. In terms of assembly, forms the MET channel composed of TMC dimer (TMC1 or TMC2), TMIE, TOMT, CIB (CIB2 or CIB3), LHFPL5 and PDH15. The interaction of TMC1 and TMC2 with TOMT is required for the transportation of TMC1/2 into the stereocilia of hair cells. Interacts (via N-terminus) with both isoforms CD1 and CD3 of PCDH15. Can form a heterodimer with TMC1, TMC5 or TMC7. In terms of tissue distribution, inner ear and testis. Expressed in cochlear inner and outer hair cells and vestibular organ hair cells.

It is found in the cell membrane. The enzyme catalyses Ca(2+)(in) = Ca(2+)(out). In terms of biological role, pore-forming subunit of the mechanotransducer (MET) non-selective cation channel complex located at the tips of stereocilia of cochlear hair cells and that mediates sensory transduction in the auditory system. The MET complex is composed of two dimeric pore-forming ion-conducting transmembrane TMC (TMC1 or TMC2) subunits, several auxiliary proteins including LHFPL5, TMIE, CIB2/3 and TOMT, the tip-link PCDH15, and possibly the PIEZO subunits. MET channel is activated by tension in the tip-link extending from the side wall of one stereocilium to the tip of the adjacent shorter stereocilium, where the channel is located. TMC2 MET channel is highly permeable to calcium and likely transports monovalent cations. Also involved in vestibular hair cell transduction current of the mammalian inner ear. The protein is Transmembrane channel-like protein 2 of Mus musculus (Mouse).